The sequence spans 313 residues: Intelectin-1a (313 aa).

The N-terminal stretch at 1 to 18 (MTQLGFLLFIMVATRGCS) is a signal peptide. The Fibrinogen C-terminal domain occupies 32 to 251 (SFFSSLPRSC…NNERAASALC (220 aa)). Cys-41 and Cys-70 are joined by a disulfide. His-86, Glu-87, Asn-89, Gly-92, Gly-97, Asp-98, and Asp-133 together coordinate Ca(2+). Intrachain disulfides connect Cys-94–Cys-280, Cys-199–Cys-259, and Cys-251–Cys-265. Ca(2+) contacts are provided by Asn-260, Glu-262, Glu-274, and Asp-282. Residues 262–263 (EH) and Glu-274 contribute to the a carbohydrate site. Ser-298 is lipidated: GPI-anchor amidated serine. A propeptide spanning residues 299-313 (SSRKITEAAVLLFYR) is cleaved from the precursor.

As to quaternary structure, monomer. May interact with LTF. Expressed in small intestinal Paneth cells in uninfected mice. Expression also detected in various other tissues including stomach, kidney, ovary and brain.

The protein localises to the cell membrane. The protein resides in the secreted. Its function is as follows. Lectin that specifically recognizes microbial carbohydrate chains in a calcium-dependent manner. Binds to microbial glycans that contain a terminal acyclic 1,2-diol moiety, including beta-linked D-galactofuranose (beta-Galf), D-phosphoglycerol-modified glycans, D-glycero-D-talo-oct-2-ulosonic acid (KO) and 3-deoxy-D-manno-oct-2-ulosonic acid (KDO). Binds to glycans from Gram-positive and Gram-negative bacteria, including K.pneumoniae, S.pneumoniae, Y.pestis, P.mirabilis and P.vulgaris. Does not bind mammalian glycans. Probably plays a role in the defense system against microorganisms. May function as adipokine that has no effect on basal glucose uptake but enhances insulin-stimulated glucose uptake in adipocytes. Increases AKT phosphorylation in the absence and presence of insulin. May interact with lactoferrin/LTF and increase its uptake, and may thereby play a role in iron absorption. The sequence is that of Intelectin-1a (Itln1) from Mus musculus (Mouse).